Here is a 118-residue protein sequence, read N- to C-terminus: Fluoride-specific ion channel FluC 1 (118 aa).

Transmembrane regions (helical) follow at residues 5 to 25 (FLLV…ISIF), 39 to 59 (FFIN…ALGP), 61 to 81 (WQLF…TFKV), and 98 to 118 (YVGL…MLGV). Na(+)-binding residues include Gly71 and Thr74.

Belongs to the fluoride channel Fluc/FEX (TC 1.A.43) family.

The protein resides in the cell membrane. The enzyme catalyses fluoride(in) = fluoride(out). With respect to regulation, na(+) is not transported, but it plays an essential structural role and its presence is essential for fluoride channel function. Functionally, fluoride-specific ion channel. Important for reducing fluoride concentration in the cell, thus reducing its toxicity. The protein is Fluoride-specific ion channel FluC 1 of Listeria innocua serovar 6a (strain ATCC BAA-680 / CLIP 11262).